Reading from the N-terminus, the 370-residue chain is 3-dehydroquinate synthase (370 aa).

NAD(+) contacts are provided by residues 108 to 112, 132 to 133, K145, and K154; these read GVIGD and TT. Zn(2+) is bound by residues E187, H249, and H267.

Belongs to the sugar phosphate cyclases superfamily. Dehydroquinate synthase family. Co(2+) is required as a cofactor. The cofactor is Zn(2+). It depends on NAD(+) as a cofactor.

Its subcellular location is the cytoplasm. The catalysed reaction is 7-phospho-2-dehydro-3-deoxy-D-arabino-heptonate = 3-dehydroquinate + phosphate. It functions in the pathway metabolic intermediate biosynthesis; chorismate biosynthesis; chorismate from D-erythrose 4-phosphate and phosphoenolpyruvate: step 2/7. In terms of biological role, catalyzes the conversion of 3-deoxy-D-arabino-heptulosonate 7-phosphate (DAHP) to dehydroquinate (DHQ). The chain is 3-dehydroquinate synthase from Cereibacter sphaeroides (strain ATCC 17023 / DSM 158 / JCM 6121 / CCUG 31486 / LMG 2827 / NBRC 12203 / NCIMB 8253 / ATH 2.4.1.) (Rhodobacter sphaeroides).